The sequence spans 312 residues: Olfactory receptor 7G3 (312 aa).

Topologically, residues 1–25 (MKAGNFSDTPEFFLLGLSGDPELQP) are extracellular. An N-linked (GlcNAc...) asparagine glycan is attached at N5. The chain crosses the membrane as a helical span at residues 26-46 (ILFMLFLSMYLATMLGNLLII). Residues 47-54 (LAVNSDSH) lie on the Cytoplasmic side of the membrane. A helical transmembrane segment spans residues 55 to 75 (LHTPMYFLLSILSLVDICFTS). The Extracellular portion of the chain corresponds to 76–99 (TTMPKMLVNIQAQAQSINYTGCLT). N93 carries N-linked (GlcNAc...) asparagine glycosylation. Residues C97 and C189 are joined by a disulfide bond. The chain crosses the membrane as a helical span at residues 100 to 120 (QICFVLVFVGLENGILVMMAY). Over 121–139 (DRFVAICHPLRYNVIMNPK) the chain is Cytoplasmic. The chain crosses the membrane as a helical span at residues 140-160 (LCGLLLLLSFIVSVLDALLHT). The Extracellular portion of the chain corresponds to 161–197 (LMVLQLTFCIDLEIPHFFCELAHILKLACSDVLINNI). A helical membrane pass occupies residues 198 to 217 (LVYLVTSLLGVVPLSGIIFS). Residues 218–237 (YTRIVSSVMKIPSAGGKYKA) lie on the Cytoplasmic side of the membrane. A helical membrane pass occupies residues 238–258 (FSICGSHLIVVSLFYGTGFGV). The Extracellular segment spans residues 259-271 (YLSSGATHSSRKG). The helical transmembrane segment at 272–292 (AIASVMYTVVTPMLNPLIYSL) threads the bilayer. Topologically, residues 293-312 (RNKDMLKALRKLISRIPSFH) are cytoplasmic.

The protein belongs to the G-protein coupled receptor 1 family.

The protein localises to the cell membrane. Its function is as follows. Odorant receptor. The chain is Olfactory receptor 7G3 (OR7G3) from Homo sapiens (Human).